The sequence spans 744 residues: Catalase-peroxidase 3 (744 aa).

Residues 106 to 228 constitute a cross-link (tryptophyl-tyrosyl-methioninium (Trp-Tyr) (with M-254)); the sequence is WHFAGTYRIG…LAASEMGLIY (123 aa). Residue His-107 is the Proton acceptor of the active site. The segment at residues 228 to 254 is a cross-link (tryptophyl-tyrosyl-methioninium (Tyr-Met) (with W-106)); that stretch reads YVDPQGPATLPDPLASARDIRETFRRM. A heme b-binding site is contributed by His-269.

This sequence belongs to the peroxidase family. Peroxidase/catalase subfamily. In terms of assembly, homodimer or homotetramer. Heme b serves as cofactor. Post-translationally, formation of the three residue Trp-Tyr-Met cross-link is important for the catalase, but not the peroxidase activity of the enzyme.

The enzyme catalyses H2O2 + AH2 = A + 2 H2O. The catalysed reaction is 2 H2O2 = O2 + 2 H2O. Its function is as follows. Bifunctional enzyme with both catalase and broad-spectrum peroxidase activity. The chain is Catalase-peroxidase 3 from Mycolicibacterium smegmatis (strain ATCC 700084 / mc(2)155) (Mycobacterium smegmatis).